The sequence spans 395 residues: Bifunctional enzyme IspD/IspF (395 aa).

The tract at residues 1–237 (MRTWVLLLAA…DANEPQVTVP (237 aa)) is 2-C-methyl-D-erythritol 4-phosphate cytidylyltransferase. The interval 238–395 (CVGWGYDVHR…AAVTGLRPMP (158 aa)) is 2-C-methyl-D-erythritol 2,4-cyclodiphosphate synthase. The a divalent metal cation site is built by Asp-244 and His-246. 4-CDP-2-C-methyl-D-erythritol 2-phosphate is bound by residues 244–246 (DVH) and 270–271 (HS). Residue His-278 coordinates a divalent metal cation. 4-CDP-2-C-methyl-D-erythritol 2-phosphate contacts are provided by residues 292 to 294 (DIG), 297 to 301 (FPDSD), 368 to 371 (TTEE), and Phe-375.

The protein in the N-terminal section; belongs to the IspD/TarI cytidylyltransferase family. IspD subfamily. In the C-terminal section; belongs to the IspF family. Requires a divalent metal cation as cofactor.

The enzyme catalyses 2-C-methyl-D-erythritol 4-phosphate + CTP + H(+) = 4-CDP-2-C-methyl-D-erythritol + diphosphate. It catalyses the reaction 4-CDP-2-C-methyl-D-erythritol 2-phosphate = 2-C-methyl-D-erythritol 2,4-cyclic diphosphate + CMP. Its pathway is isoprenoid biosynthesis; isopentenyl diphosphate biosynthesis via DXP pathway; isopentenyl diphosphate from 1-deoxy-D-xylulose 5-phosphate: step 2/6. It functions in the pathway isoprenoid biosynthesis; isopentenyl diphosphate biosynthesis via DXP pathway; isopentenyl diphosphate from 1-deoxy-D-xylulose 5-phosphate: step 4/6. Its function is as follows. Bifunctional enzyme that catalyzes the formation of 4-diphosphocytidyl-2-C-methyl-D-erythritol from CTP and 2-C-methyl-D-erythritol 4-phosphate (MEP) (IspD), and catalyzes the conversion of 4-diphosphocytidyl-2-C-methyl-D-erythritol 2-phosphate (CDP-ME2P) to 2-C-methyl-D-erythritol 2,4-cyclodiphosphate (ME-CPP) with a corresponding release of cytidine 5-monophosphate (CMP) (IspF). This chain is Bifunctional enzyme IspD/IspF, found in Nitratidesulfovibrio vulgaris (strain ATCC 29579 / DSM 644 / CCUG 34227 / NCIMB 8303 / VKM B-1760 / Hildenborough) (Desulfovibrio vulgaris).